Here is a 356-residue protein sequence, read N- to C-terminus: Alanine racemase (356 aa).

The active-site Proton acceptor; specific for D-alanine is the lysine 34. Lysine 34 is subject to N6-(pyridoxal phosphate)lysine. Arginine 129 serves as a coordination point for substrate. Tyrosine 253 serves as the catalytic Proton acceptor; specific for L-alanine. Methionine 301 provides a ligand contact to substrate.

Belongs to the alanine racemase family. The cofactor is pyridoxal 5'-phosphate.

It catalyses the reaction L-alanine = D-alanine. Its pathway is amino-acid biosynthesis; D-alanine biosynthesis; D-alanine from L-alanine: step 1/1. Functionally, catalyzes the interconversion of L-alanine and D-alanine. May also act on other amino acids. This is Alanine racemase (alr) from Nitrosococcus oceani (strain ATCC 19707 / BCRC 17464 / JCM 30415 / NCIMB 11848 / C-107).